The primary structure comprises 273 residues: MYVSNGKDTCQLLGPVSLFVQTLMGMTAVIVLLVKRNYEHPRRKMIVWSYDIGKQIIGSLGIHFLNLGISILKKRRRSLFAITAKGNDDEDQCDWYFLNLLLDTTVGIPILWLCLYIIEKVLKSLHFQNIESGNYFPSKTVGSHPRKPLFSAFVKQLLIFIVGLGVMKFCVFLILNYLEDLAYWFADLILGWSDSWPNFQVFLVMFVFPILLNCFQYFCVDNVIRLHSESLTITNAENFETNTFLNDEIPDLSEVSNEVPNKDNNISSYGSII.

Residues 1-13 (MYVSNGKDTCQLL) lie on the Vacuolar side of the membrane. The chain crosses the membrane as a helical span at residues 14-34 (GPVSLFVQTLMGMTAVIVLLV). The Cytoplasmic portion of the chain corresponds to 35-51 (KRNYEHPRRKMIVWSYD). The helical transmembrane segment at 52 to 72 (IGKQIIGSLGIHFLNLGISIL) threads the bilayer. Residues 73 to 97 (KKRRRSLFAITAKGNDDEDQCDWYF) are Vacuolar-facing. A helical transmembrane segment spans residues 98 to 118 (LNLLLDTTVGIPILWLCLYII). Residues 119-156 (EKVLKSLHFQNIESGNYFPSKTVGSHPRKPLFSAFVKQ) lie on the Cytoplasmic side of the membrane. A helical membrane pass occupies residues 157 to 177 (LLIFIVGLGVMKFCVFLILNY). Over 178-198 (LEDLAYWFADLILGWSDSWPN) the chain is Vacuolar. A helical membrane pass occupies residues 199-219 (FQVFLVMFVFPILLNCFQYFC). Over 220–273 (VDNVIRLHSESLTITNAENFETNTFLNDEIPDLSEVSNEVPNKDNNISSYGSII) the chain is Cytoplasmic.

The protein resides in the vacuole membrane. The polypeptide is Vacuolar membrane protein YPL162C (Saccharomyces cerevisiae (strain ATCC 204508 / S288c) (Baker's yeast)).